A 1012-amino-acid chain; its full sequence is Multiple C2 domain and transmembrane region protein 10 (1012 aa).

A C2 1 domain is found at 1-115 (MTEAKTGTGN…REGESVVQLY (115 aa)). The interval 141–203 (ENGENVRRVN…SQQNGQGQRM (63 aa)) is disordered. The span at 148-160 (RVNRSGGSKKSKK) shows a compositional bias: basic residues. Low complexity-rich tracts occupy residues 161 to 180 (VQNV…QQQQ) and 188 to 202 (RGNQ…QGQR). C2 domains follow at residues 262-376 (SSHK…PQWY), 411-551 (KAGN…SRWF), and 585-710 (YNSD…THSY). Ca(2+) contacts are provided by Glu-296, Glu-344, Asn-346, and Glu-349. 3 consecutive transmembrane segments (helical) span residues 810-830 (FFRL…VEVM), 841-861 (VFVL…PCLL), and 952-972 (ATFL…TVPV).

It belongs to the MCTP family. It depends on Ca(2+) as a cofactor. As to expression, highly expressed in roots meristems, shoot apical meristems (SAMs) and in incipient leaf primordia. Observed in flowers.

It is found in the endoplasmic reticulum membrane. Its function is as follows. May function as a signaling molecule by regulating the trafficking of other regulators. This Arabidopsis thaliana (Mouse-ear cress) protein is Multiple C2 domain and transmembrane region protein 10.